A 213-amino-acid chain; its full sequence is Nucleolar protein 12 (213 aa).

Residues 33–96 (GFHKRKVERK…RLVTAKTESV (64 aa)) adopt a coiled-coil conformation. The interval 118 to 213 (ARLLGLTPPE…LTGKARHSGE (96 aa)) is disordered. Composition is skewed to basic residues over residues 170–182 (AHSRKKVKRKHPR) and 198–213 (KAQRRRLTGKARHSGE).

The protein belongs to the RRP17 family. Interacts with KIAA1191.

It is found in the nucleus. The protein resides in the nucleolus. It localises to the cytoplasm. In terms of biological role, multifunctional RNA binding protein that plays a role in RNA metabolism and DNA maintenance. Participates in the resolution of DNA stress and the maintenance of genome integrity by localizing to sites of DNA insults. Also plays a role in proper nucleolar organization by limiting nucleolar size and regulating nucleolar number. Mechanistically, regulates the nucleolar levels of fibrillarin and nucleolin, two key players in pre-rRNA processing and ribosome assembly. This chain is Nucleolar protein 12 (NOL12), found in Homo sapiens (Human).